The sequence spans 156 residues: Ribosome maturation factor RimP (156 aa).

It belongs to the RimP family.

It is found in the cytoplasm. Required for maturation of 30S ribosomal subunits. The chain is Ribosome maturation factor RimP from Halalkalibacterium halodurans (strain ATCC BAA-125 / DSM 18197 / FERM 7344 / JCM 9153 / C-125) (Bacillus halodurans).